A 236-amino-acid chain; its full sequence is 3-deoxy-D-manno-octulosonic acid kinase (236 aa).

Asp-167 is an active-site residue.

The protein belongs to the protein kinase superfamily. KdkA/RfaP family.

The protein resides in the cell inner membrane. The catalysed reaction is an alpha-Kdo-(2-&gt;6)-lipid IVA + ATP = a 4-O-phospho-alpha-Kdo-(2-&gt;6)-lipid IVA + ADP + H(+). The protein operates within bacterial outer membrane biogenesis; LPS core biosynthesis. Its function is as follows. Catalyzes the ATP-dependent phosphorylation of the 3-deoxy-D-manno-octulosonic acid (Kdo) residue in Kdo-lipid IV(A) at the 4-OH position. This Vibrio vulnificus (strain YJ016) protein is 3-deoxy-D-manno-octulosonic acid kinase.